The following is a 753-amino-acid chain: 5-methyltetrahydropteroyltriglutamate--homocysteine methyltransferase (753 aa).

Residues 17 to 20 (RELK) and K117 contribute to the 5-methyltetrahydropteroyltri-L-glutamate site. L-homocysteine-binding positions include 431–433 (IGS) and E484. L-methionine contacts are provided by residues 431-433 (IGS) and E484. 5-methyltetrahydropteroyltri-L-glutamate contacts are provided by residues 515–516 (RC) and W561. An L-homocysteine-binding site is contributed by D599. D599 lines the L-methionine pocket. E605 is a binding site for 5-methyltetrahydropteroyltri-L-glutamate. The Zn(2+) site is built by H641, C643, and E665. H694 (proton donor) is an active-site residue. Zn(2+) is bound at residue C726.

Belongs to the vitamin-B12 independent methionine synthase family. It depends on Zn(2+) as a cofactor.

The enzyme catalyses 5-methyltetrahydropteroyltri-L-glutamate + L-homocysteine = tetrahydropteroyltri-L-glutamate + L-methionine. It participates in amino-acid biosynthesis; L-methionine biosynthesis via de novo pathway; L-methionine from L-homocysteine (MetE route): step 1/1. Functionally, catalyzes the transfer of a methyl group from 5-methyltetrahydrofolate to homocysteine resulting in methionine formation. This is 5-methyltetrahydropteroyltriglutamate--homocysteine methyltransferase from Escherichia coli (strain ATCC 8739 / DSM 1576 / NBRC 3972 / NCIMB 8545 / WDCM 00012 / Crooks).